Here is a 454-residue protein sequence, read N- to C-terminus: Protein odr-4 homolog (454 aa).

2 helical membrane passes run Met82–Asn102 and Ile432–Phe452.

The protein belongs to the ODR-4 family. Ubiquitously expressed.

The protein localises to the membrane. Functionally, may play a role in the trafficking of a subset of G-protein coupled receptors. The protein is Protein odr-4 homolog of Homo sapiens (Human).